A 102-amino-acid chain; its full sequence is Small ribosomal subunit protein uS10 (102 aa).

Belongs to the universal ribosomal protein uS10 family. As to quaternary structure, part of the 30S ribosomal subunit.

Its function is as follows. Involved in the binding of tRNA to the ribosomes. The sequence is that of Small ribosomal subunit protein uS10 from Symbiobacterium thermophilum (strain DSM 24528 / JCM 14929 / IAM 14863 / T).